The chain runs to 393 residues: S-adenosylmethionine synthase (393 aa).

Mg(2+) is bound at residue glutamate 9. Residue histidine 15 coordinates ATP. Residue glutamate 43 coordinates K(+). The L-methionine site is built by glutamate 56 and glutamine 99. Residues 167-169 (HGK), 235-238 (SGRF), aspartate 246, 252-253 (RK), alanine 269, lysine 273, and lysine 277 each bind ATP. Aspartate 246 contacts L-methionine. An L-methionine-binding site is contributed by lysine 277.

This sequence belongs to the AdoMet synthase family. As to quaternary structure, homotetramer. Requires Mn(2+) as cofactor. Mg(2+) serves as cofactor. The cofactor is Co(2+). K(+) is required as a cofactor. Root.

Its subcellular location is the cytoplasm. It carries out the reaction L-methionine + ATP + H2O = S-adenosyl-L-methionine + phosphate + diphosphate. It participates in amino-acid biosynthesis; S-adenosyl-L-methionine biosynthesis; S-adenosyl-L-methionine from L-methionine: step 1/1. Catalyzes the formation of S-adenosylmethionine from methionine and ATP. The reaction comprises two steps that are both catalyzed by the same enzyme: formation of S-adenosylmethionine (AdoMet) and triphosphate, and subsequent hydrolysis of the triphosphate. The chain is S-adenosylmethionine synthase (METK) from Pinus banksiana (Jack pine).